Here is a 122-residue protein sequence, read N- to C-terminus: Glycine cleavage system H protein (122 aa).

The Lipoyl-binding domain occupies 22-103; it reads IGIIGISDYA…AFGSWFFKVE (82 aa). Residue K63 is modified to N6-lipoyllysine.

This sequence belongs to the GcvH family. As to quaternary structure, the glycine cleavage system is composed of four proteins: P, T, L and H. The cofactor is (R)-lipoate.

Functionally, the glycine cleavage system catalyzes the degradation of glycine. The H protein shuttles the methylamine group of glycine from the P protein to the T protein. This is Glycine cleavage system H protein from Treponema denticola (strain ATCC 35405 / DSM 14222 / CIP 103919 / JCM 8153 / KCTC 15104).